Consider the following 578-residue polypeptide: MTLFILTETSAGYALLKAKDKKLLKRDDLATEAATAEGVSNLVKLKSFQKFDSAATALEEVASLVEGKVTPRLASLLDEVKDEKKVSLAVADPKLGNAIGKLPGLDIQLIADSTTTDIYRAIREHLPTLIPGLAPQDMSTMSLGLSHSLARHKLKFSPDKIDTMIVQAIGLLDDLDKELNNYAMRVKEWYGWHFPELAKILNDNLAYAKLVLKMGMRTNWESSDLAEILPEELEGSVKAAADRSMGTEISEEDLENIQALAEQVVGFTEYRQQLAGYLTARMNAIAPNLTALVGELVGARLIAHAGSLTNLSKSPASTLQILGAEKALFRALKTKHDTPKYGLIYHASLIGQATGKNKGKMARVLAAKASLGIRVDALAEWDEDATEEDKAALGIEARFNLERKLAGMEGKPLKPRGVTIAPNGTPAQAKKFELNEARKYNADADAVDEPSSAKKQKKLVEEVQDTEMADADSDAEADSSDESEEESSKKKSKKSKDADLEKMAEKAGLSLKRYKRKLERGEIEFDAEGNPSSISKKDLKKAKKEAKKADKGEEKKRKRSDDNEDNEKKQKKKKKKDE.

In terms of domain architecture, Nop spans 285–410 (IAPNLTALVG…LERKLAGMEG (126 aa)). The interval 443–578 (DADAVDEPSS…KQKKKKKKDE (136 aa)) is disordered. Residues 462 to 485 (EVQDTEMADADSDAEADSSDESEE) show a composition bias toward acidic residues. Composition is skewed to basic and acidic residues over residues 495 to 505 (SKDADLEKMAE) and 547 to 561 (KKADKGEEKKRKRSD). The segment covering 569 to 578 (KQKKKKKKDE) has biased composition (basic residues).

Belongs to the NOP5/NOP56 family.

It localises to the nucleus. The protein localises to the nucleolus. Its function is as follows. Required for pre-18S rRNA processing. May bind microtubules. In Aspergillus oryzae (strain ATCC 42149 / RIB 40) (Yellow koji mold), this protein is Nucleolar protein 58 (nop58).